A 162-amino-acid chain; its full sequence is Endoribonuclease YbeY (162 aa).

His128, His132, and His138 together coordinate Zn(2+).

It belongs to the endoribonuclease YbeY family. It depends on Zn(2+) as a cofactor.

It localises to the cytoplasm. Its function is as follows. Single strand-specific metallo-endoribonuclease involved in late-stage 70S ribosome quality control and in maturation of the 3' terminus of the 16S rRNA. The polypeptide is Endoribonuclease YbeY (Lactococcus lactis subsp. cremoris (strain MG1363)).